A 230-amino-acid polypeptide reads, in one-letter code: DNA repair protein rdl1 (230 aa).

Interacts with rlp1 and sws1.

The protein localises to the cytoplasm. It localises to the nucleus. Its function is as follows. Involved in homologous recombination where it functions at an early stage of recombination in a pre-recombinogenic complex with rlp1 and sws1. Also has a role at a later stage of recombination in association with the rhp55-rhp57 complex. This chain is DNA repair protein rdl1 (rdl1), found in Schizosaccharomyces pombe (strain 972 / ATCC 24843) (Fission yeast).